The chain runs to 408 residues: RNA-splicing ligase RtcB1 (408 aa).

Residues Asp75, Cys78, His168, His185, and His281 each contribute to the Mn(2+) site. 167–171 (NHFIE) contacts GMP. GMP contacts are provided by residues 281–282 (HN), 313–316 (PGSM), Ser320, 337–340 (HGAG), and Lys407. His337 (GMP-histidine intermediate) is an active-site residue.

This sequence belongs to the RtcB family. Monomer. It depends on Mn(2+) as a cofactor.

The enzyme catalyses a 3'-end 3'-phospho-ribonucleotide-RNA + a 5'-end dephospho-ribonucleoside-RNA + GTP = a ribonucleotidyl-ribonucleotide-RNA + GMP + diphosphate. It carries out the reaction a 3'-end 2',3'-cyclophospho-ribonucleotide-RNA + a 5'-end dephospho-ribonucleoside-RNA + GTP + H2O = a ribonucleotidyl-ribonucleotide-RNA + GMP + diphosphate + H(+). In terms of biological role, GTP-dependent RNA ligase that is involved in RNA repair. Joins RNA with 2',3'-cyclic-phosphate or 3'-phosphate ends to RNA with 5'-hydroxy ends. GTP-dependent RNA ligase that is involved in tRNA repair. Repairs broken tRNA(Asp) and tRNA(Arg) that have been cleaved by colicin E5 or colicin D, respectively. Does not repair damaged 16S rRNA in 30S ribosomal subunits. The polypeptide is RNA-splicing ligase RtcB1 (Escherichia coli (strain ATCC 25922 / DSM 1103 / LMG 8223 / NCIMB 12210 / NCTC 12241 / WDCM 00013 / Seattle 1946)).